A 586-amino-acid chain; its full sequence is Actin-related protein 9 (586 aa).

The disordered stretch occupies residues 141–169 (STPIVDKDADVDPLQRSTPDDTEPNSEEN).

This sequence belongs to the actin family. ARP8 subfamily.

The sequence is that of Actin-related protein 9 (ARP9) from Oryza sativa subsp. indica (Rice).